The sequence spans 435 residues: Hexane cyclase xenF (435 aa).

Residues 1–23 (MSPAANMFRTLTLTALVSAVVSA) form the signal peptide. N81 and N156 each carry an N-linked (GlcNAc...) asparagine glycan.

Belongs to the Diels-Alderase family.

It functions in the pathway mycotoxin biosynthesis. Its function is as follows. Hexane cyclase; part of the gene cluster that mediates the biosynthesis of xenoacremones such as xenoacremone A, a compound that shows inhibitory activity toward the PI3K/AKT signaling pathway and which has the ability to induce apoptosis of A549 lung cancer cells. Within the pathway, cooperation of the hybrid PKS-NRPS xenE and the trans-acting enoyl reductase xenG is responsible for the formation of the reduced tyrosine-nonaketide derivative. The alpha/beta hydrolase xenA then accelerates intramolecular nucleophilic attack to give a pyrrolidone derivative. Subsequently, three enzymes, xenF, xenD, and xenC, coordinately participate in the conversion to xenoacremone B. XenF catalyzes sigmatropic rearrangement to form an A-ring, which leads to an unusual intermediate with a hexane ring, which is required for the formation of the tricarbocyclic product. Epoxidation catalyzed by xenD and the formation of the paracyclophane ether catalyzed by xenC initiate a spontaneous intramolecular Diels-Alder (IMDA) reaction to yield xenoacremone B. Spontaneous hydration of xenoacremone B leads to the formation of xenoacremone A, which undergoes subsequent methylation to afford xenoacremone C. This Xenoacremonium sinensis (Endophyte fungus) protein is Hexane cyclase xenF.